A 416-amino-acid polypeptide reads, in one-letter code: Iron/alpha-ketoglutarate-dependent dioxygenase asqJ (416 aa).

Residues 1–53 (MGYPKAFTSSDSEPEPDLSRDLGNPVMGNPGVVSRSSSTVAQHSVRNNPTGPD) form a disordered region. Over residues 34-50 (SRSSSTVAQHSVRNNPT) the composition is skewed to polar residues. Fe cation contacts are provided by His242, Asp244, and His319.

Belongs to the PhyH family. As to quaternary structure, homodimer. The cofactor is Fe cation.

The catalysed reaction is (-)-4'-methoxycyclopeptine + 2-oxoglutarate + O2 = (Z)-4'-methoxydehydrocyclopeptine + succinate + CO2 + H2O. The enzyme catalyses (Z)-4'-methoxydehydrocyclopeptine + 2-oxoglutarate + O2 = (-)-4'-methoxycyclopenine + succinate + CO2. It carries out the reaction (-)-cyclopeptine + 2-oxoglutarate + O2 = (Z)-dehydrocyclopeptine + succinate + CO2 + H2O. It catalyses the reaction (Z)-dehydrocyclopeptine + 2-oxoglutarate + O2 = (-)-cyclopenine + succinate + CO2. Its pathway is secondary metabolite biosynthesis. The protein operates within alkaloid biosynthesis. It functions in the pathway mycotoxin biosynthesis. Functionally, iron/alpha-ketoglutarate-dependent dioxygenase; part of the gene cluster that mediates the biosynthesis of the aspoquinolone mycotoxins. Within the pathway, the iron/alpha-ketoglutarate-dependent dioxygenase asqJ acts as a (-)-cyclopenine synthase that converts 4'-methoxycyclopeptin into 4'-methoxydehydrocyclopeptin through dehydrogenation to form a double bond between C-alpha and C-beta of the O-methyltyrosine side chain. AsqJ is a very unique dioxygenase which is capable of catalyzing radical-mediated dehydrogenation and epoxidation reactions sequentially on a 6,7-benzo-diazepinedione substrate in the 4'-methoxyviridicatin biosynthetic pathway. AsqJ is also capable of converting cyclopeptin into dehydrocyclopeptin. The first step of the pathway is catalyzed by the nonribosomal peptide synthetase asqK that condenses anthranilic acid and O-methyl-L-tyrosine to produce 4'-methoxycyclopeptin. 4'-methoxycyclopeptin is then converted to 4'-methoxydehydrocyclopeptin by the ketoglutarate-dependent dioxygenase asqJ. AsqJ also converts its first product 4'-methoxydehydrocyclopeptin to 4'-methoxycyclopenin. The following conversion of 4'-methoxycyclopenin into 4'-methoxyviridicatin is catalyzed by the cyclopenase asqI. 4'-methoxyviridicatin is the precursor of quinolone natural products, and is further converted to quinolinone B. The prenyltransferase asqH1 then catalyzes the canonical Friedel-Crafts alkylation of quinolinone B with dimethylallyl cation to yield dimethylallyl quinolone, which is subjected to FAD-dependent dehydrogenation by the FAD-linked oxidoreductase asqF to yield conjugated aryl diene. The delta(3') double bond then serves as the site of the second alkylation with DMAPP catalyzed by the prenyltransferase asqH2 to yield a carbenium ion intermediate, which can be attacked by H(2)O to yield a styrenyl quinolone containing a C3'-hydroxyprenyl chain. The FAD-dependent monooxygenase asqG performs epoxidation of the terminal C7'-C8' olefin. Finally, after dehydratation of the epoxide at C3 by asqC, the quinolone epoxide rearrangement protein asqO catalyzes an enzymatic 3-exo-tet cyclization to yield the cyclopropyl-THF ring system in aspoquinolone. The sequence is that of Iron/alpha-ketoglutarate-dependent dioxygenase asqJ from Emericella nidulans (strain FGSC A4 / ATCC 38163 / CBS 112.46 / NRRL 194 / M139) (Aspergillus nidulans).